A 321-amino-acid chain; its full sequence is Endochitinase 1 (321 aa).

The N-terminal stretch at 1–21 (MSFRALSVFSLFLSYLILGSA) is a signal peptide. The Chitin-binding type-1 domain occupies 22–64 (EQCGRQAGGALCPGGLCCSQFGWCGNTDDYCKKENGCQSQCSG). 7 disulfide bridges follow: Cys24–Cys39, Cys33–Cys45, Cys38–Cys52, Cys58–Cys62, Cys93–Cys156, Cys167–Cys175, and Cys274–Cys306. The segment at 65–98 (SGGDTGGLDSLITRERFDQMLLHRNDGGCPARGF) is hinge. The catalytic stretch occupies residues 99-321 (YTYDAFIAAA…YNNGPSVDSM (223 aa)). The Proton donor role is filled by Glu137.

Belongs to the glycosyl hydrolase 19 family. Chitinase class I subfamily.

Its subcellular location is the vacuole. It carries out the reaction Random endo-hydrolysis of N-acetyl-beta-D-glucosaminide (1-&gt;4)-beta-linkages in chitin and chitodextrins.. Defense against chitin-containing fungal pathogens. This chain is Endochitinase 1 (CHIA1), found in Theobroma cacao (Cacao).